A 303-amino-acid polypeptide reads, in one-letter code: MALLRETERADGVAPVGEHVILRLKAHLDVVHQIEPVQADVPGSEHFVVRDSGGELAGYAHVDTAEEKTAGQLVAELAVHPRHRRRGAGARLVEALLDRADLPVEPSPDDTDTARLRIWSHGEHPGALRLAERYGLVRARELWRMGRPLDTELAEAELPPGVTIRAFRTGVDEPAVVRVNHRAFSWHPEQGAMTEDDLRLKEREDWFDPAGFLLAVDSHDTLLGFHWTKIHPDGTGEVYVVGVDPDTQGNGLGRSLTVAGLRHLRAKGCAQVMLYVEADNTAAIKVYQRLEFARWDTDVQFGR.

N-acetyltransferase domains follow at residues 1–150 and 162–303; these read MALL…RPLD and VTIR…QFGR. Residue Glu-18 coordinates 1D-myo-inositol 2-(L-cysteinylamino)-2-deoxy-alpha-D-glucopyranoside. 77–79 serves as a coordination point for acetyl-CoA; the sequence is LAV. The 1D-myo-inositol 2-(L-cysteinylamino)-2-deoxy-alpha-D-glucopyranoside site is built by Glu-189, Lys-229, and Glu-237. Residues 241–243 and 248–254 each bind acetyl-CoA; these read VGV and QGNGLGR. 1D-myo-inositol 2-(L-cysteinylamino)-2-deoxy-alpha-D-glucopyranoside is bound at residue Tyr-275. 280–285 contributes to the acetyl-CoA binding site; that stretch reads NTAAIK.

This sequence belongs to the acetyltransferase family. MshD subfamily. Monomer.

The enzyme catalyses 1D-myo-inositol 2-(L-cysteinylamino)-2-deoxy-alpha-D-glucopyranoside + acetyl-CoA = mycothiol + CoA + H(+). Catalyzes the transfer of acetyl from acetyl-CoA to desacetylmycothiol (Cys-GlcN-Ins) to form mycothiol. The chain is Mycothiol acetyltransferase from Saccharopolyspora erythraea (strain ATCC 11635 / DSM 40517 / JCM 4748 / NBRC 13426 / NCIMB 8594 / NRRL 2338).